Reading from the N-terminus, the 150-residue chain is Large ribosomal subunit protein bL9 (150 aa).

It belongs to the bacterial ribosomal protein bL9 family.

Functionally, binds to the 23S rRNA. The chain is Large ribosomal subunit protein bL9 from Neisseria meningitidis serogroup C (strain 053442).